Here is a 151-residue protein sequence, read N- to C-terminus: Nucleoside diphosphate kinase (151 aa).

The ATP site is built by Lys11, Phe59, Arg87, Arg104, and Asn114. His117 (pros-phosphohistidine intermediate) is an active-site residue.

Belongs to the NDK family. Homotrimer. The cofactor is Mg(2+).

It carries out the reaction a 2'-deoxyribonucleoside 5'-diphosphate + ATP = a 2'-deoxyribonucleoside 5'-triphosphate + ADP. The enzyme catalyses a ribonucleoside 5'-diphosphate + ATP = a ribonucleoside 5'-triphosphate + ADP. Major role in the synthesis of nucleoside triphosphates other than ATP. The ATP gamma phosphate is transferred to the NDP beta phosphate via a ping-pong mechanism, using a phosphorylated active-site intermediate. This chain is Nucleoside diphosphate kinase (ndk1), found in Schizosaccharomyces pombe (strain 972 / ATCC 24843) (Fission yeast).